A 465-amino-acid chain; its full sequence is Ribulose bisphosphate carboxylase large chain (465 aa).

N6,N6,N6-trimethyllysine is present on lysine 4. Substrate is bound by residues asparagine 113 and threonine 163. Lysine 165 serves as the catalytic Proton acceptor. Lysine 167 contributes to the substrate binding site. Mg(2+) is bound by residues lysine 191, aspartate 193, and glutamate 194. At lysine 191 the chain carries N6-carboxylysine. Histidine 284 acts as the Proton acceptor in catalysis. Substrate is bound by residues arginine 285, histidine 317, and serine 369.

This sequence belongs to the RuBisCO large chain family. Type I subfamily. Heterohexadecamer of 8 large chains and 8 small chains; disulfide-linked. The disulfide link is formed within the large subunit homodimers. The cofactor is Mg(2+). Post-translationally, the disulfide bond which can form in the large chain dimeric partners within the hexadecamer appears to be associated with oxidative stress and protein turnover.

The protein resides in the plastid. It localises to the chloroplast. It carries out the reaction 2 (2R)-3-phosphoglycerate + 2 H(+) = D-ribulose 1,5-bisphosphate + CO2 + H2O. It catalyses the reaction D-ribulose 1,5-bisphosphate + O2 = 2-phosphoglycolate + (2R)-3-phosphoglycerate + 2 H(+). In terms of biological role, ruBisCO catalyzes two reactions: the carboxylation of D-ribulose 1,5-bisphosphate, the primary event in carbon dioxide fixation, as well as the oxidative fragmentation of the pentose substrate in the photorespiration process. Both reactions occur simultaneously and in competition at the same active site. The sequence is that of Ribulose bisphosphate carboxylase large chain from Nepenthes alata (Winged pitcher plant).